The sequence spans 411 residues: Putative nickel insertion protein (411 aa).

It belongs to the LarC family.

The polypeptide is Putative nickel insertion protein (Methanothermobacter thermautotrophicus (strain ATCC 29096 / DSM 1053 / JCM 10044 / NBRC 100330 / Delta H) (Methanobacterium thermoautotrophicum)).